The following is a 353-amino-acid chain: uncharacterized protein (353 aa).

Positions 1-23 (MSAGKGLLLVICLLFLPLKSAMA) are cleaved as a signal peptide.

It to E.coli YqiI.

In terms of biological role, may be involved in a fimbrial system chaperoned by YbgP and exported by YbgQ. This is an uncharacterized protein from Escherichia coli (strain K12).